Here is a 148-residue protein sequence, read N- to C-terminus: Caltractin (148 aa).

4 consecutive EF-hand domains span residues 4–39, 40–75, 77–112, and 113–148; these read EQKQEXREAFDLFDTDGSGTIDAKELKVXMXALGFE, PKKEEIQKMISDIDKDGSGTIDFEEFLQMMTAKMGE, DSREEIMKAFRLFDDDQTGKITFKNLKRVAKELGEN, and LTDEEIQEMIDEADRDGDGEINEEEFFRIMKKTSLF. Ca(2+) is bound by residues aspartate 17, aspartate 19, serine 21, threonine 23, glutamate 28, aspartate 53, aspartate 55, serine 57, threonine 59, and glutamate 64. 5 residues coordinate Ca(2+): aspartate 126, aspartate 128, aspartate 130, glutamate 132, and glutamate 137.

The protein belongs to the centrin family. In terms of tissue distribution, ubiquitous.

This calcium-binding protein is found in the basal body complexes (the functional homolog of the centrosome in animal cell). In mitotic cells it is specifically associated with the poles of the mitotic spindles at the sites of the duplicated basal body complexes. This Spermatozopsis similis (Green alga) protein is Caltractin.